Consider the following 272-residue polypeptide: Golgi to ER traffic protein 5 (272 aa).

2 disordered regions span residues 1–35 (MSTV…HSGT) and 85–105 (LHAP…PGSS). One can recognise a Ubiquitin-like domain in the interval 108–198 (ITVHLKSARN…VEFGVMIIGG (91 aa)). The interval 212 to 231 (SAEQKESYEPPKPAVGPSGE) is disordered.

Belongs to the GET5 family. In terms of assembly, forms homodimers via its C-terminal domain. Component of the get4/get5/sgt2 sorting complex. Binds directly sgt12 homodimers.

It is found in the cytoplasm. Its function is as follows. Component of the get4/get5/sgt2 sorting complex involved in the GET (guided entry of TA proteins) pathway that leads to the insertion of tail-anchored (TA) proteins into the endoplasmic reticulum. Get4 and get5 form an obligate complex that catalyzes the transfer of tail-anchored proteins destined to the endoplasmic reticulum from sgt2 to the cytosolic targeting factor which then targets the TA protein to the ER membrane via get1/get2. This Aspergillus fumigatus (strain ATCC MYA-4609 / CBS 101355 / FGSC A1100 / Af293) (Neosartorya fumigata) protein is Golgi to ER traffic protein 5.